A 263-amino-acid polypeptide reads, in one-letter code: Microtubule-associated protein RP/EB family member 1 (263 aa).

Residues 14-116 (NLSRHDMLAW…FVQWFKKFFD (103 aa)) enclose the Calponin-homology (CH) domain. The segment at 150 to 182 (KPLGTGSAGPQRPIVAQRTPATPKGGTGMVKKA) is disordered. Residues 180–250 (KKAAGDDESA…LYATDEGFVI (71 aa)) form the EB1 C-terminal domain.

The protein belongs to the MAPRE family.

Its subcellular location is the cytoplasm. It localises to the cytoskeleton. The protein localises to the microtubule organizing center. The protein resides in the centrosome. It is found in the golgi apparatus. Its subcellular location is the spindle. It localises to the spindle pole. Its function is as follows. Plus-end tracking protein (+TIP) that binds to the plus-end of microtubules and regulates the dynamics of the microtubule cytoskeleton. Promotes cytoplasmic microtubule nucleation and elongation. Involved in mitotic spindle positioning by stabilizing microtubules and promoting dynamic connection between astral microtubules and the cortex during mitotic chromosome segregation. This Coturnix japonica (Japanese quail) protein is Microtubule-associated protein RP/EB family member 1 (MAPRE1).